Here is a 428-residue protein sequence, read N- to C-terminus: Maltoporin (428 aa).

Residues 1 to 24 (MKSMRILPISLTIMAGLLSIEASA) form the signal peptide.

The protein belongs to the porin LamB (TC 1.B.3) family. In terms of assembly, homotrimer formed of three 18-stranded antiparallel beta-barrels, containing three independent channels.

It localises to the cell outer membrane. It carries out the reaction beta-maltose(in) = beta-maltose(out). In terms of biological role, involved in the transport of maltose and maltodextrins. In Photorhabdus laumondii subsp. laumondii (strain DSM 15139 / CIP 105565 / TT01) (Photorhabdus luminescens subsp. laumondii), this protein is Maltoporin.